The primary structure comprises 200 residues: Phosphatidylethanolamine N-methyltransferase B (200 aa).

The Lumenal segment spans residues 1–8 (MEKGLSSD). Positions 9-29 (LIIAFVAIVLHVVNYNVTAQF) form an intramembrane region, helical. Over 30–39 (EYKTRYFTKL) the chain is Lumenal. The chain crosses the membrane as a helical span at residues 40–58 (IGRNAIYYYAVFLIISALI). The Cytoplasmic segment spans residues 59–86 (RDHFINVAVLSDKDSIILFPTEIANMIG). The helical transmembrane segment at 87–107 (DSCFIFGILLNIWTLKALGIK) threads the bilayer. 91–93 (IFG) is a binding site for S-adenosyl-L-methionine. The Lumenal portion of the chain corresponds to 108 to 150 (GMYNGDSFGHIMDSPVTGGPYQFFSDPQYVGTTIAALGVAIRN). The chain crosses the membrane as a helical span at residues 151 to 171 (QSIYGFLCTILVGVVFYISAT). Topologically, residues 172-200 (FVETPHLKNIYSNRSYSKINFKNLKSLKN) are cytoplasmic. 174–175 (ET) contributes to the S-adenosyl-L-methionine binding site.

It belongs to the class VI-like SAM-binding methyltransferase superfamily. PEMT/PEM2 methyltransferase family.

The protein localises to the endoplasmic reticulum membrane. It localises to the mitochondrion membrane. It carries out the reaction a 1,2-diacyl-sn-glycero-3-phospho-N-methylethanolamine + S-adenosyl-L-methionine = a 1,2-diacyl-sn-glycero-3-phospho-N,N-dimethylethanolamine + S-adenosyl-L-homocysteine + H(+). The enzyme catalyses a 1,2-diacyl-sn-glycero-3-phospho-N,N-dimethylethanolamine + S-adenosyl-L-methionine = a 1,2-diacyl-sn-glycero-3-phosphocholine + S-adenosyl-L-homocysteine + H(+). It catalyses the reaction a 1,2-diacyl-sn-glycero-3-phosphoethanolamine + S-adenosyl-L-methionine = a 1,2-diacyl-sn-glycero-3-phospho-N-methylethanolamine + S-adenosyl-L-homocysteine + H(+). It participates in phospholipid metabolism; phosphatidylcholine biosynthesis. Its function is as follows. Catalyzes the three sequential steps of the methylation pathway of phosphatidylcholine biosynthesis, the SAM-dependent methylation of phosphatidylethanolamine (PE) to phosphatidylmonomethylethanolamine (PMME), PMME to phosphatidyldimethylethanolamine (PDME), and PDME to phosphatidylcholine (PC). The sequence is that of Phosphatidylethanolamine N-methyltransferase B (pemtB) from Dictyostelium discoideum (Social amoeba).